The primary structure comprises 352 residues: Poly(A)+ RNA export protein (352 aa).

WD repeat units follow at residues 28 to 58, 72 to 102, 113 to 146, 192 to 229, and 252 to 282; these read PPED…RIYE, EHQG…KVFD, AHDD…KYWD, IFKL…AIQN, and ADVY…SFWD.

The protein belongs to the WD repeat rae1 family. In terms of assembly, interacts with rpn15/dss1 and uap56.

The protein localises to the nucleus. Functionally, required for mitotic cell growth as well as for spore germination. Functions in cell cycle progression through trafficking of proteins required for mitosis. Has a role in the mRNA export process. The sequence is that of Poly(A)+ RNA export protein (rae1) from Schizosaccharomyces pombe (strain 972 / ATCC 24843) (Fission yeast).